Reading from the N-terminus, the 584-residue chain is A-type ATP synthase subunit A (584 aa).

Residue 233–240 (GPFGSGKT) participates in ATP binding.

This sequence belongs to the ATPase alpha/beta chains family. Has multiple subunits with at least A(3), B(3), C, D, E, F, H, I and proteolipid K(x).

It localises to the cell membrane. It catalyses the reaction ATP + H2O + 4 H(+)(in) = ADP + phosphate + 5 H(+)(out). In terms of biological role, component of the A-type ATP synthase that produces ATP from ADP in the presence of a proton gradient across the membrane. The A chain is the catalytic subunit. The protein is A-type ATP synthase subunit A of Methanothermobacter thermautotrophicus (strain ATCC 29096 / DSM 1053 / JCM 10044 / NBRC 100330 / Delta H) (Methanobacterium thermoautotrophicum).